A 378-amino-acid chain; its full sequence is MAKKLKKNEEITKKFGDERRKALDDALKNIEKDFGKGAVMRLGERAEQKVQVMSSGSLALDIALGAGGYPKGRIIEIYGPESSGKTTVALHAVAQAQKEGGIAAFIDAEHALDPAYAAALGVNIDELLLSQPDSGEQGLEIAGKLIDSGAVDLVVVDSVAALVPRAEIDGDIGDSHVGLQARMMSQAMRKLSASINKTKTIAIFINQLREKVGVMFGNPETTPGGRALKFYASVRLDVRGTTQIKGTGDQKDSSIGKETKIKVVKNKVAPPFKVAEVEIMYGEGISRTGELVKIASDLDIIQKAGAWFSYNGEKIGQGSENAKRYLADHPQLFDEIDRKVRVKFGLLEESEEESAMAVASEETDDLALDLDNGIEIED.

79-86 serves as a coordination point for ATP; sequence GPESSGKT.

Belongs to the RecA family.

The protein localises to the cytoplasm. Functionally, can catalyze the hydrolysis of ATP in the presence of single-stranded DNA, the ATP-dependent uptake of single-stranded DNA by duplex DNA, and the ATP-dependent hybridization of homologous single-stranded DNAs. It interacts with LexA causing its activation and leading to its autocatalytic cleavage. This chain is Protein RecA, found in Streptococcus pyogenes serotype M2 (strain MGAS10270).